The sequence spans 189 residues: Threonylcarbamoyl-AMP synthase (189 aa).

Residues 7 to 189 (NPRVNYAANM…LLTGQVVRPS (183 aa)) form the YrdC-like domain.

The protein belongs to the SUA5 family. TsaC subfamily.

The protein localises to the cytoplasm. The enzyme catalyses L-threonine + hydrogencarbonate + ATP = L-threonylcarbamoyladenylate + diphosphate + H2O. Required for the formation of a threonylcarbamoyl group on adenosine at position 37 (t(6)A37) in tRNAs that read codons beginning with adenine. Catalyzes the conversion of L-threonine, HCO(3)(-)/CO(2) and ATP to give threonylcarbamoyl-AMP (TC-AMP) as the acyladenylate intermediate, with the release of diphosphate. This Cellvibrio japonicus (strain Ueda107) (Pseudomonas fluorescens subsp. cellulosa) protein is Threonylcarbamoyl-AMP synthase.